Reading from the N-terminus, the 308-residue chain is Transaldolase (308 aa).

Residue lysine 125 is the Schiff-base intermediate with substrate of the active site.

Belongs to the transaldolase family. Type 1 subfamily. In terms of assembly, homodimer.

Its subcellular location is the cytoplasm. The catalysed reaction is D-sedoheptulose 7-phosphate + D-glyceraldehyde 3-phosphate = D-erythrose 4-phosphate + beta-D-fructose 6-phosphate. It functions in the pathway carbohydrate degradation; pentose phosphate pathway; D-glyceraldehyde 3-phosphate and beta-D-fructose 6-phosphate from D-ribose 5-phosphate and D-xylulose 5-phosphate (non-oxidative stage): step 2/3. In terms of biological role, transaldolase is important for the balance of metabolites in the pentose-phosphate pathway. In Pseudomonas savastanoi pv. phaseolicola (strain 1448A / Race 6) (Pseudomonas syringae pv. phaseolicola (strain 1448A / Race 6)), this protein is Transaldolase.